Here is a 720-residue protein sequence, read N- to C-terminus: uncharacterized protein (720 aa).

The N-myristoyl glycine; by host moiety is linked to residue glycine 2.

This is an uncharacterized protein from Cryphonectria parasitica mycoreovirus 1 (strain 9B21) (CpMYRV-1).